A 561-amino-acid chain; its full sequence is Transcription factor Clamp (561 aa).

The C2H2-type 1 zinc finger occupies Phe127 to His149. Cys129, Cys132, His145, and His149 together coordinate Zn(2+). The segment at Thr290–Gln315 is disordered. 6 consecutive C2H2-type zinc fingers follow at residues Phe360–His382, Tyr388–His410, Tyr416–His438, Tyr444–His466, Tyr472–His494, and Tyr500–His522.

As to quaternary structure, homodimer. Interacts with msl-2; promoting recruitment of the male-specific lethal (MSL) histone acetyltransferase complex to chromatin. Interacts with Nelf-A. Interacts with NELF-B.

Its subcellular location is the nucleus. The protein localises to the chromosome. Transcription factor involved in X-chromosome dosage compensation in males, the process by which transcription of the single X chromosome in the male is elevated. Binds to the DNA sequence (GA)n. Clamp-binding promotes nucleosome depletion and chromatin accessibility, thereby allowing access to other transcription factors. Specifically binds to cis-acting elements on the X-chromosome named chromatin entry sites and promotes recruitment of the male-specific lethal (MSL) histone acetyltransferase complex, which associates with actively transcribed genes on the male X-chromosome to upregulate their expression. Mechanistically, acts by promoting chromatin accessibility at chromatin entry sites, facilitating DNA-binding of msl-2, followed by MSL complex recruitment. In addition to dosage compensation, also involved in zygotic genome activation (ZGA), a critical event in early embryonic development during which the developmental control passes from maternally provided mRNAs to the expression of the zygotic genome after fertilization. Maternally-provided protein cooperates with Zelda (zld) to activate zygotic transcription by increasing chromatin accessibility at promoters of specific genes and facilitate zld occupancy at a subset of key embryonic promoters. Also acts as an activator of gypsy chromatin insulator function by promoting binding of Cp190 to chromatin. In Drosophila melanogaster (Fruit fly), this protein is Transcription factor Clamp.